A 374-amino-acid chain; its full sequence is Methionine import ATP-binding protein MetN 2 (374 aa).

Residues 32-271 (VRFVGLGKTY…PQHEVSQTLL (240 aa)) form the ABC transporter domain. ATP is bound at residue 68 to 75 (GRSGAGKS).

The protein belongs to the ABC transporter superfamily. Methionine importer (TC 3.A.1.24) family. The complex is composed of two ATP-binding proteins (MetN), two transmembrane proteins (MetI) and a solute-binding protein (MetQ).

Its subcellular location is the cell inner membrane. The catalysed reaction is L-methionine(out) + ATP + H2O = L-methionine(in) + ADP + phosphate + H(+). It catalyses the reaction D-methionine(out) + ATP + H2O = D-methionine(in) + ADP + phosphate + H(+). In terms of biological role, part of the ABC transporter complex MetNIQ involved in methionine import. Responsible for energy coupling to the transport system. The sequence is that of Methionine import ATP-binding protein MetN 2 from Pseudomonas fluorescens (strain Pf0-1).